Here is a 150-residue protein sequence, read N- to C-terminus: Probable NADH dehydrogenase [ubiquinone] 1 alpha subcomplex subunit 5 (150 aa).

This sequence belongs to the complex I NDUFA5 subunit family. Complex I is composed of 45 different subunits.

Its subcellular location is the mitochondrion inner membrane. In terms of biological role, accessory subunit of the mitochondrial membrane respiratory chain NADH dehydrogenase (Complex I), that is believed not to be involved in catalysis. Complex I functions in the transfer of electrons from NADH to the respiratory chain. The immediate electron acceptor for the enzyme is believed to be ubiquinone. In Caenorhabditis elegans, this protein is Probable NADH dehydrogenase [ubiquinone] 1 alpha subcomplex subunit 5.